We begin with the raw amino-acid sequence, 121 residues long: NADH-quinone oxidoreductase subunit A 2 (121 aa).

3 consecutive transmembrane segments (helical) span residues 6 to 26, 60 to 80, and 89 to 109; these read FLPVLFMVTGIVLVAAATLFV, VPFFILAILLVVFDVEAMFLF, and IGFVGYIEMFVFMLLLLVGFA.

It belongs to the complex I subunit 3 family. In terms of assembly, NDH-1 is composed of 14 different subunits. Subunits NuoA, H, J, K, L, M, N constitute the membrane sector of the complex.

It localises to the cell inner membrane. It catalyses the reaction a quinone + NADH + 5 H(+)(in) = a quinol + NAD(+) + 4 H(+)(out). In terms of biological role, NDH-1 shuttles electrons from NADH, via FMN and iron-sulfur (Fe-S) centers, to quinones in the respiratory chain. The immediate electron acceptor for the enzyme in this species is believed to be ubiquinone. Couples the redox reaction to proton translocation (for every two electrons transferred, four hydrogen ions are translocated across the cytoplasmic membrane), and thus conserves the redox energy in a proton gradient. The chain is NADH-quinone oxidoreductase subunit A 2 from Rhizobium meliloti (strain 1021) (Ensifer meliloti).